The primary structure comprises 226 residues: MARTKAAASSQLGLELTQTVAVVQRLCGVDEAGRGPLAGPVYAAAVVLNPARQIRGLADSKILSAEKREALFDRICDHALGWHIASASVEEIDSINILHASMLAMQRAVQGLAASGVIPDLVQVDGNRCPQVAFPVEAIVKGDAKVRAISAASILAKVARDRELLKLHQEYPEYGFDSHFGYPTPQHFTALEQFGATPHHRRSFAPVRKVLERGMVRTMSSEAPPF.

The 193-residue stretch at Gln24–Val216 folds into the RNase H type-2 domain. Residues Asp30, Glu31, and Asp125 each contribute to the a divalent metal cation site.

This sequence belongs to the RNase HII family. The cofactor is Mn(2+). Requires Mg(2+) as cofactor.

It is found in the cytoplasm. The catalysed reaction is Endonucleolytic cleavage to 5'-phosphomonoester.. Its function is as follows. Endonuclease that specifically degrades the RNA of RNA-DNA hybrids. This chain is Ribonuclease HII, found in Cupriavidus metallidurans (strain ATCC 43123 / DSM 2839 / NBRC 102507 / CH34) (Ralstonia metallidurans).